A 334-amino-acid polypeptide reads, in one-letter code: Heat-inducible transcription repressor HrcA (334 aa).

Belongs to the HrcA family.

Its function is as follows. Negative regulator of class I heat shock genes (grpE-dnaK-dnaJ and groELS operons). Prevents heat-shock induction of these operons. The protein is Heat-inducible transcription repressor HrcA of Acidovorax sp. (strain JS42).